The following is a 483-amino-acid chain: Regulatory protein ViaA (483 aa).

Belongs to the ViaA family. As to quaternary structure, homodimer. Interacts with RavA.

The protein resides in the cytoplasm. Functionally, component of the RavA-ViaA chaperone complex, which may act on the membrane to optimize the function of some of the respiratory chains. ViaA stimulates the ATPase activity of RavA. In Escherichia coli (strain SMS-3-5 / SECEC), this protein is Regulatory protein ViaA.